The primary structure comprises 434 residues: Putative nuclease OPG089 (434 aa).

Residues Asp33, Asp74, Glu168, Asp170, Asp196, and Asp198 each contribute to the Mg(2+) site.

This sequence belongs to the XPG/RAD2 endonuclease family. FEN1 subfamily. The cofactor is Mg(2+).

It localises to the virion. Its function is as follows. Putative nuclease that seems to be required for double-strand break repair, homologous recombination, and production of full-length viral genomic DNA. This is Putative nuclease OPG089 (OPG089) from Homo sapiens (Human).